We begin with the raw amino-acid sequence, 894 residues long: RNA polymerase I-specific transcription initiation factor RRN6 (894 aa).

Residues 803–894 (PPFNLNSQSQ…KKKKRIRGFG (92 aa)) form a disordered region. Composition is skewed to polar residues over residues 806–823 (NLNS…QSSG), 832–849 (KTQS…QNLS), and 863–880 (QPPS…PRNS). The segment covering 881–894 (QKAKKKKKRIRGFG) has biased composition (basic residues).

As to quaternary structure, component of the core factor (CF) complex, which consists of RRN6, RRN7 and RRN11. The CF heterotrimer may further dimerize to form a hexamer. RRN6 interacts with RRN7, RRN11 and RRN9.

Its subcellular location is the cytoplasm. The protein localises to the nucleus. The protein resides in the nucleolus. In terms of biological role, acts as a component of the core factor (CF) complex which is essential for the initiation of rDNA transcription by RNA polymerase I. After binding of UAF (upstream activation factor) to an upstream element of the promoter, CF is recruited in a SPT15/TBP-dependent manner to form a preinitiation complex. This is RNA polymerase I-specific transcription initiation factor RRN6 (RRN6) from Saccharomyces cerevisiae (strain ATCC 204508 / S288c) (Baker's yeast).